A 154-amino-acid polypeptide reads, in one-letter code: Deoxyuridine 5'-triphosphate nucleotidohydrolase (154 aa).

Residues 72-74 (RSG), N85, 89-91 (LID), and M99 contribute to the substrate site.

This sequence belongs to the dUTPase family. The cofactor is Mg(2+).

It catalyses the reaction dUTP + H2O = dUMP + diphosphate + H(+). The protein operates within pyrimidine metabolism; dUMP biosynthesis; dUMP from dCTP (dUTP route): step 2/2. Functionally, this enzyme is involved in nucleotide metabolism: it produces dUMP, the immediate precursor of thymidine nucleotides and it decreases the intracellular concentration of dUTP so that uracil cannot be incorporated into DNA. This chain is Deoxyuridine 5'-triphosphate nucleotidohydrolase, found in Psychrobacter arcticus (strain DSM 17307 / VKM B-2377 / 273-4).